We begin with the raw amino-acid sequence, 541 residues long: Chaperonin GroEL (541 aa).

Residues 29–32 (TLGP), 86–90 (DGTTT), glycine 413, and aspartate 495 each bind ATP.

The protein belongs to the chaperonin (HSP60) family. Forms a cylinder of 14 subunits composed of two heptameric rings stacked back-to-back. Interacts with the co-chaperonin GroES.

It is found in the cytoplasm. The catalysed reaction is ATP + H2O + a folded polypeptide = ADP + phosphate + an unfolded polypeptide.. Functionally, together with its co-chaperonin GroES, plays an essential role in assisting protein folding. The GroEL-GroES system forms a nano-cage that allows encapsulation of the non-native substrate proteins and provides a physical environment optimized to promote and accelerate protein folding. The protein is Chaperonin GroEL of Thermoanaerobacter pseudethanolicus (strain ATCC 33223 / 39E) (Clostridium thermohydrosulfuricum).